The chain runs to 698 residues: Sulfhydryl oxidase 2 (698 aa).

The signal sequence occupies residues 1 to 21 (MAAAGAAVARSPGIGAGPALR). A Thioredoxin domain is found at 34 to 178 (PRLLVLLAAA…RQTMIDFLQN (145 aa)). A glycan (N-linked (GlcNAc...) asparagine) is linked at Asn77. Residues Cys91 and Cys94 each act as nucleophile in the active site. Intrachain disulfides connect Cys91-Cys94 and Cys122-Cys131. 3 N-linked (GlcNAc...) asparagine glycosylation sites follow: Asn178, Asn218, and Asn266. Cys418 and Cys430 are joined by a disulfide. The ERV/ALR sulfhydryl oxidase domain maps to 421 to 530 (SRSELRGYPC…EDPRFPKLQW (110 aa)). Residues Arg426, Trp433, His437, Glu478, His482, 505-512 (WKKHNMVN), Lys527, and Trp530 contribute to the FAD site. An intrachain disulfide couples Cys476 to Cys479. Cys536 and Cys539 form a disulfide bridge. A disordered region spans residues 570–624 (TYSADQGDSSEGGTLARGEEEEKRLTPPEVSHGDRDTQSVRPPGALGPRPALPES). A compositionally biased stretch (polar residues) spans 572 to 581 (SADQGDSSEG). Ser579 is modified (phosphoserine). Residues 586–607 (RGEEEEKRLTPPEVSHGDRDTQ) show a composition bias toward basic and acidic residues. Positions 610–622 (RPPGALGPRPALP) are enriched in low complexity. The chain crosses the membrane as a helical span at residues 662–682 (SLCVVLYVASSLFLMVMYFFF).

Belongs to the quiescin-sulfhydryl oxidase (QSOX) family. FAD serves as cofactor. In terms of tissue distribution, expressed in pancreas, brain, placenta, kidney, heart and fetal tissues. Weakly expressed in lung, liver and skeletal muscles.

It is found in the membrane. The protein resides in the secreted. Its subcellular location is the cell membrane. It localises to the nucleus membrane. It catalyses the reaction 2 R'C(R)SH + O2 = R'C(R)S-S(R)CR' + H2O2. Its function is as follows. Catalyzes the oxidation of sulfhydryl groups in peptide and protein thiols to disulfides with the reduction of oxygen to hydrogen peroxide. May contribute to disulfide bond formation in a variety of secreted proteins. Also seems to play a role in regulating the sensitization of neuroblastoma cells for interferon-gamma-induced apoptosis. This Homo sapiens (Human) protein is Sulfhydryl oxidase 2 (QSOX2).